Reading from the N-terminus, the 628-residue chain is UvrABC system protein C (628 aa).

Positions 21-100 constitute a GIY-YIG domain; that stretch reads TGPGIYQFKN…IKELKPRYNV (80 aa). A UVR domain is found at 214–249; it reads AGLLKELHEKMLTAAAELRFEEAAELKMQLQSLRRY.

This sequence belongs to the UvrC family. In terms of assembly, interacts with UvrB in an incision complex.

Its subcellular location is the cytoplasm. Functionally, the UvrABC repair system catalyzes the recognition and processing of DNA lesions. UvrC both incises the 5' and 3' sides of the lesion. The N-terminal half is responsible for the 3' incision and the C-terminal half is responsible for the 5' incision. The polypeptide is UvrABC system protein C (Chlorobium luteolum (strain DSM 273 / BCRC 81028 / 2530) (Pelodictyon luteolum)).